Consider the following 470-residue polypeptide: D-serine/D-alanine/glycine transporter (470 aa).

12 helical membrane passes run 30 to 50 (LIAI…KTIS), 51 to 71 (LAGP…FFVM), 102 to 122 (FTGW…VVAI), 128 to 148 (FWFP…LLLV), 162 to 182 (FWFA…GLVM), 211 to 231 (LSGF…IELV), 256 to 276 (IIMF…WSSV), 283 to 303 (FVEL…NFVV), 350 to 370 (FSCI…SVIG), 371 to 391 (AFTM…TIIL), 413 to 433 (PLGK…LVLL), and 441 to 461 (QALL…LFIG).

This sequence belongs to the amino acid-polyamine-organocation (APC) superfamily. Amino acid transporter (AAT) (TC 2.A.3.1) family.

Its subcellular location is the cell inner membrane. The catalysed reaction is D-alanine(in) + H(+)(in) = D-alanine(out) + H(+)(out). It catalyses the reaction D-serine(out) + H(+)(out) = D-serine(in) + H(+)(in). The enzyme catalyses glycine(in) + H(+)(in) = glycine(out) + H(+)(out). It carries out the reaction D-cycloserine(in) + H(+)(in) = D-cycloserine(out) + H(+)(out). With respect to regulation, uptake of D-serine is inhibited by D-alanine, D-cycloserine, glycine and at high concentrations of D-threonine. In terms of biological role, permease that is involved in the transport across the cytoplasmic membrane of D-alanine, D-serine and glycine. Is the only transporter of D-alanine. Transports D-serine less efficiently than DsdX. In addition, in minimal media, transports the broad spectrum antibiotic D-cycloserine into the cell. Transports D-cycloserine only in minimal media, and not in a complex medium, suggesting that CycA does not play a role in D-cycloserine transport when E.coli is grown in a complex or biologically relevant medium, probably due to competition from other CycA substrates present in the medium. The polypeptide is D-serine/D-alanine/glycine transporter (cycA) (Escherichia coli O6:H1 (strain CFT073 / ATCC 700928 / UPEC)).